A 392-amino-acid polypeptide reads, in one-letter code: Phosphoglycerate kinase (392 aa).

Residues 21–23 (DLN), Arg-36, 59–62 (HLGR), Arg-113, and Arg-146 each bind substrate. ATP-binding positions include Lys-197, Glu-319, and 345–348 (GGDT).

Belongs to the phosphoglycerate kinase family. In terms of assembly, monomer.

It localises to the cytoplasm. It carries out the reaction (2R)-3-phosphoglycerate + ATP = (2R)-3-phospho-glyceroyl phosphate + ADP. Its pathway is carbohydrate degradation; glycolysis; pyruvate from D-glyceraldehyde 3-phosphate: step 2/5. This Thioalkalivibrio sulfidiphilus (strain HL-EbGR7) protein is Phosphoglycerate kinase.